A 63-amino-acid chain; its full sequence is Cecropin-1/3 (63 aa).

Positions 1 to 23 (MNFYKVFIFVALILAISLGQSEA) are cleaved as a signal peptide. Residue Arg62 is modified to Arginine amide.

Belongs to the cecropin family.

It is found in the secreted. Functionally, cecropins have lytic and antibacterial activity against several Gram-positive and Gram-negative bacteria. The sequence is that of Cecropin-1/3 (Cec1) from Drosophila virilis (Fruit fly).